A 534-amino-acid polypeptide reads, in one-letter code: Echilunin cytochrome P450 monooxygenase (534 aa).

Residues 18–38 form a helical membrane-spanning segment; sequence VSPAALSWAVVAIYLGTFFWL. Cysteine 441 is a heme binding site.

Belongs to the cytochrome P450 family. Heme serves as cofactor.

The protein localises to the membrane. It catalyses the reaction preechinulin + reduced [NADPH--hemoprotein reductase] + O2 = neoechinulin A + oxidized [NADPH--hemoprotein reductase] + 2 H2O + H(+). It participates in secondary metabolite biosynthesis. Its pathway is alkaloid biosynthesis. Its function is as follows. Cytochrome P450 monooxygenase; part of the gene cluster that mediates the biosynthesis of echinulin family alkaloid. The pathway begins with the biosynthesis of the cyclic dipeptide cyclo-L-Trp-L-Ala (cyclo-TA) by the NRPS echPS via condensation of L-alanine and L-tryptophan. The prenyltransferase echPT1 then catalyzes the first prenylation step, a reverse prenylation reaction at C2, to yield preechinulin. Preechinulin is the substrate of the cytochrome P450 monooxygenase echP450 that catalyzes the formation of the double bond between C10 and C11 to produce neoechulin A. The unique prenyltransferase echPT2 functions as a competitive enzyme with echP450 for preechinulin metabolization and uses preechinulin for effective regiospecific prenylations. Preechinulin is prenylated by echPT2 at C5 or C7. C7-prenylation leads to accumulation of tardioxopiperazine B without further modification by echPT2. In contrast, the C5-prenylated tardioxopiperazine A can be prenylated again by echPT2, predominantly at C7 to form echinulin or less frequently at C4 to give variecolorin L. EchPT2 also accepts neoechilunin A to produce varlecolorin G (prenylation at C5) or isoechinulin A (prenylation at C7). EchPT2 further converts isoechinulin A into dehydroechinulin. Moreover, a yet unidentified enzyme can also convert neoechilunin A into neoechilunin B by introducing a double bond between positions C14 and C17 and thus provides a further substrate to echPT2 for C5 and C7 prenylation. This chain is Echilunin cytochrome P450 monooxygenase, found in Aspergillus ruber (strain CBS 135680).